Reading from the N-terminus, the 261-residue chain is Carnitinyl-CoA dehydratase (261 aa).

The active-site Nucleophile is E111. Catalysis depends on E131, which acts as the Proton acceptor.

It belongs to the enoyl-CoA hydratase/isomerase family.

It carries out the reaction (R)-carnitinyl-CoA = crotonobetainyl-CoA + H2O. The protein operates within amine and polyamine metabolism; carnitine metabolism. Catalyzes the reversible dehydration of L-carnitinyl-CoA to crotonobetainyl-CoA. This Salmonella arizonae (strain ATCC BAA-731 / CDC346-86 / RSK2980) protein is Carnitinyl-CoA dehydratase.